The following is a 373-amino-acid chain: Transaldolase (373 aa).

Lysine 143 acts as the Schiff-base intermediate with substrate in catalysis.

The protein belongs to the transaldolase family. Type 2 subfamily.

It localises to the cytoplasm. The catalysed reaction is D-sedoheptulose 7-phosphate + D-glyceraldehyde 3-phosphate = D-erythrose 4-phosphate + beta-D-fructose 6-phosphate. It participates in carbohydrate degradation; pentose phosphate pathway; D-glyceraldehyde 3-phosphate and beta-D-fructose 6-phosphate from D-ribose 5-phosphate and D-xylulose 5-phosphate (non-oxidative stage): step 2/3. Its function is as follows. Transaldolase is important for the balance of metabolites in the pentose-phosphate pathway. This Mycobacterium tuberculosis (strain ATCC 25618 / H37Rv) protein is Transaldolase (tal).